We begin with the raw amino-acid sequence, 251 residues long: Small ribosomal subunit protein uS2 (251 aa).

The protein belongs to the universal ribosomal protein uS2 family.

This is Small ribosomal subunit protein uS2 from Aromatoleum aromaticum (strain DSM 19018 / LMG 30748 / EbN1) (Azoarcus sp. (strain EbN1)).